Reading from the N-terminus, the 309-residue chain is Sodium/potassium-transporting ATPase subunit beta-1 (309 aa).

The Cytoplasmic portion of the chain corresponds to 1 to 45 (MSKNNGKGAKGEFEFPQPAKKQTFSEMIYNPQEGTFFGRTGKSWS). The helical; Signal-anchor for type II membrane protein transmembrane segment at 46-66 (QLLLFYTIFYIVLAALFTICM) threads the bilayer. At 67 to 309 (QGLLSTISDT…GSVTFQILLD (243 aa)) the chain is on the extracellular side. N-linked (GlcNAc...) asparagine glycosylation occurs at asparagine 133. Disulfide bonds link cysteine 143–cysteine 155 and cysteine 165–cysteine 179. Residue asparagine 211 is glycosylated (N-linked (GlcNAc...) asparagine). Cysteine 225 and cysteine 282 are disulfide-bonded.

It belongs to the X(+)/potassium ATPases subunit beta family. As to quaternary structure, the sodium/potassium-transporting ATPase is composed of a catalytic alpha subunit, an auxiliary non-catalytic beta subunit and an additional regulatory subunit. Interacts with nkain. As to expression, in embryos, it is expressed in the neurons of the CNS and PNS, in Garland cells and posterior spiracles. In adults, it is concentrated in the thorax and abdomen (muscle tissue, digestive system and Malpighian tubules) and weakly expressed in the head. Expression is diffuse in the nervous system.

Its subcellular location is the cell membrane. Functionally, this is the non-catalytic component of the active enzyme, which catalyzes the hydrolysis of ATP coupled with the exchange of Na(+) and K(+) ions across the plasma membrane. The beta subunit regulates, through assembly of alpha/beta heterodimers, the number of sodium pumps transported to the plasma membrane. The sequence is that of Sodium/potassium-transporting ATPase subunit beta-1 (nrv1) from Drosophila melanogaster (Fruit fly).